The primary structure comprises 300 residues: tRNA-cytidine(32) 2-sulfurtransferase (300 aa).

The PP-loop motif signature appears at 41–46 (SGGKDS). Positions 116, 119, and 207 each coordinate [4Fe-4S] cluster.

This sequence belongs to the TtcA family. As to quaternary structure, homodimer. Requires Mg(2+) as cofactor. [4Fe-4S] cluster is required as a cofactor.

Its subcellular location is the cytoplasm. The catalysed reaction is cytidine(32) in tRNA + S-sulfanyl-L-cysteinyl-[cysteine desulfurase] + AH2 + ATP = 2-thiocytidine(32) in tRNA + L-cysteinyl-[cysteine desulfurase] + A + AMP + diphosphate + H(+). It participates in tRNA modification. Functionally, catalyzes the ATP-dependent 2-thiolation of cytidine in position 32 of tRNA, to form 2-thiocytidine (s(2)C32). The sulfur atoms are provided by the cysteine/cysteine desulfurase (IscS) system. This is tRNA-cytidine(32) 2-sulfurtransferase from Idiomarina loihiensis (strain ATCC BAA-735 / DSM 15497 / L2-TR).